Here is an 833-residue protein sequence, read N- to C-terminus: Leucine--tRNA ligase (833 aa).

A 'HIGH' region motif is present at residues 41 to 52 (PYPSGAGLHVGH). Residues 610–614 (KMSKS) carry the 'KMSKS' region motif. Position 613 (lysine 613) interacts with ATP.

The protein belongs to the class-I aminoacyl-tRNA synthetase family.

It localises to the cytoplasm. It catalyses the reaction tRNA(Leu) + L-leucine + ATP = L-leucyl-tRNA(Leu) + AMP + diphosphate. In Streptococcus pneumoniae (strain Taiwan19F-14), this protein is Leucine--tRNA ligase.